The primary structure comprises 363 residues: MKKGGFSNNLKLAIPVAGEQSITKFLTQSGTFKDGDLRVNKDGVRIISQLEPEVLSPIKPADDQLSLSDLDMVKVIGKGSSGVVQLVQHKWTGQFFALKVIQLNIDEAIRKAIAQELKINQSSQCPNLVTSYQSFYDNGAISLILEYMDGGSLADFLKSVKAIPDSYLSAIFRQVLQGLIYLHHDRHIIHRDLKPSNLLINHRGEVKITDFGVSTVMTNTAGLANTFVGTYNYMSPERIVGNKYGNKSDIWSLGLVVLECATGKFPYAPPNQEETWTSVFELMEAIVDQPPPALPSGNFSPELSSFISTCLQKDPNSRSSAKELMEHPFLNKYDYSGINLASYFTDAGSPLATLGNLSGTFSV.

Serine 56 is modified (phosphoserine). One can recognise a Protein kinase domain in the interval 70–330; that stretch reads LDMVKVIGKG…AKELMEHPFL (261 aa). ATP is bound by residues 76 to 84 and lysine 99; that span reads IGKGSSGVV. The active-site Proton acceptor is aspartate 192. 3 positions are modified to phosphothreonine: threonine 220, threonine 226, and threonine 230.

It belongs to the protein kinase superfamily. STE Ser/Thr protein kinase family. MAP kinase kinase subfamily. As to quaternary structure, interacts with MEKK1, MPK4 and MPK6. May form a ternary complex composed of MEKK1 and MKK1/MKK2 and MPK4. Interacts with MPK10 and MPK11. Interacts with MAPKKK5 mainly in the cytosol. Phosphorylation at Thr-220 and Thr-226 by MAP kinase kinase kinases positively regulates kinase activity. Phosphorylated by MEKK1 in response to cold. Phosphorylated by MAPKKK5.

It carries out the reaction L-seryl-[protein] + ATP = O-phospho-L-seryl-[protein] + ADP + H(+). It catalyses the reaction L-threonyl-[protein] + ATP = O-phospho-L-threonyl-[protein] + ADP + H(+). The catalysed reaction is L-tyrosyl-[protein] + ATP = O-phospho-L-tyrosyl-[protein] + ADP + H(+). Activated in response to cold and salt stresses through serine and threonine phosphorylation by MEKK1. Functionally, MEKK1, MKK1/MKK2 and MPK4 function in a signaling pathway that modulates the expression of genes responding to biotic and abiotic stresses and also plays an important role in pathogen defense by negatively regulating innate immunity. Plays a role in abiotic stress tolerance and plant disease resistance through activation of MPK4 and MPK6 by phosphorylation. Acts redundantly with MKK1. The protein is Mitogen-activated protein kinase kinase 2 (MKK2) of Arabidopsis thaliana (Mouse-ear cress).